The following is a 164-amino-acid chain: Shikimate kinase (164 aa).

Residue 10-15 (GVGKTT) participates in ATP binding. T14 is a binding site for Mg(2+). Residues D28, R52, and G75 each contribute to the substrate site. Residue R116 participates in ATP binding. R134 is a binding site for substrate. R151 is an ATP binding site.

This sequence belongs to the shikimate kinase family. As to quaternary structure, monomer. Mg(2+) is required as a cofactor.

It localises to the cytoplasm. The catalysed reaction is shikimate + ATP = 3-phosphoshikimate + ADP + H(+). It participates in metabolic intermediate biosynthesis; chorismate biosynthesis; chorismate from D-erythrose 4-phosphate and phosphoenolpyruvate: step 5/7. In terms of biological role, catalyzes the specific phosphorylation of the 3-hydroxyl group of shikimic acid using ATP as a cosubstrate. This is Shikimate kinase from Streptococcus equi subsp. zooepidemicus (strain MGCS10565).